The chain runs to 332 residues: Ketol-acid reductoisomerase (NAD(+)) (332 aa).

Positions 1–181 (MKIYYDQDAD…GATRAGVIQT (181 aa)) constitute a KARI N-terminal Rossmann domain. NAD(+) is bound by residues 24-27 (YGSQ), Ser-50, and 82-85 (DEKQ). His-107 is a catalytic residue. Residue Gly-133 participates in NAD(+) binding. In terms of domain architecture, KARI C-terminal knotted spans 182–327 (TFKEETETDL…ARLRGMMPWL (146 aa)). Mg(2+) is bound by residues Asp-190, Glu-194, Glu-226, and Glu-230. Ser-251 is a binding site for substrate.

It belongs to the ketol-acid reductoisomerase family. Mg(2+) serves as cofactor.

It carries out the reaction (2R)-2,3-dihydroxy-3-methylbutanoate + NAD(+) = (2S)-2-acetolactate + NADH + H(+). The protein operates within amino-acid biosynthesis; L-isoleucine biosynthesis; L-isoleucine from 2-oxobutanoate: step 2/4. It functions in the pathway amino-acid biosynthesis; L-valine biosynthesis; L-valine from pyruvate: step 2/4. In terms of biological role, involved in the biosynthesis of branched-chain amino acids (BCAA). Catalyzes an alkyl-migration followed by a ketol-acid reduction of (S)-2-acetolactate (S2AL) to yield (R)-2,3-dihydroxy-isovalerate. In the isomerase reaction, S2AL is rearranged via a Mg-dependent methyl migration to produce 3-hydroxy-3-methyl-2-ketobutyrate (HMKB). In the reductase reaction, this 2-ketoacid undergoes a metal-dependent reduction by NADH to yield (R)-2,3-dihydroxy-isovalerate. The protein is Ketol-acid reductoisomerase (NAD(+)) of Thermacetogenium phaeum (strain ATCC BAA-254 / DSM 26808 / PB).